Reading from the N-terminus, the 1479-residue chain is Chromosome partition protein MukB (1479 aa).

Position 34–41 (34–41 (GGNGAGKS)) interacts with ATP. Coiled coils occupy residues 138-163 (ETLNDRQARVVSLNELKDKLEAMEGV) and 331-664 (QAAS…RLSQ). Residues 665-782 (PGGSEDPRLN…ALPLFGRAAR (118 aa)) form a flexible hinge region. Coiled-coil stretches lie at residues 831–1112 (DDPE…TAKA) and 1206–1257 (VEAI…MLNQ).

This sequence belongs to the SMC family. MukB subfamily. As to quaternary structure, homodimerization via its hinge domain. Binds to DNA via its C-terminal region. Interacts, and probably forms a ternary complex, with MukE and MukF via its C-terminal region. The complex formation is stimulated by calcium or magnesium. Interacts with tubulin-related protein FtsZ.

The protein resides in the cytoplasm. The protein localises to the nucleoid. Plays a central role in chromosome condensation, segregation and cell cycle progression. Functions as a homodimer, which is essential for chromosome partition. Involved in negative DNA supercoiling in vivo, and by this means organize and compact chromosomes. May achieve or facilitate chromosome segregation by condensation DNA from both sides of a centrally located replisome during cell division. This Klebsiella pneumoniae protein is Chromosome partition protein MukB.